The sequence spans 190 residues: Potassium-transporting ATPase KdpC subunit (190 aa).

Residues 11–31 (LIVLMSLITGVAYPLVVTGVA) form a helical membrane-spanning segment.

This sequence belongs to the KdpC family. The system is composed of three essential subunits: KdpA, KdpB and KdpC.

The protein localises to the cell inner membrane. In terms of biological role, part of the high-affinity ATP-driven potassium transport (or Kdp) system, which catalyzes the hydrolysis of ATP coupled with the electrogenic transport of potassium into the cytoplasm. This subunit acts as a catalytic chaperone that increases the ATP-binding affinity of the ATP-hydrolyzing subunit KdpB by the formation of a transient KdpB/KdpC/ATP ternary complex. This is Potassium-transporting ATPase KdpC subunit from Pseudomonas syringae pv. tomato (strain ATCC BAA-871 / DC3000).